A 428-amino-acid chain; its full sequence is Elongation factor 1-alpha (428 aa).

Residues 5 to 217 (KPHVNIVFIG…DQIPEPEKPT (213 aa)) form the tr-type G domain. Residues 14–21 (GHVDHGKS) are G1. Residue 14 to 21 (GHVDHGKS) coordinates GTP. Mg(2+) is bound at residue serine 21. The G2 stretch occupies residues 68 to 72 (GITID). Residues 89–92 (DAPG) are G3. GTP contacts are provided by residues 89–93 (DAPGH) and 144–147 (NKMD). Residues 144–147 (NKMD) are G4. The interval 181–183 (SAW) is G5.

It belongs to the TRAFAC class translation factor GTPase superfamily. Classic translation factor GTPase family. EF-Tu/EF-1A subfamily.

The protein resides in the cytoplasm. It carries out the reaction GTP + H2O = GDP + phosphate + H(+). In terms of biological role, GTP hydrolase that promotes the GTP-dependent binding of aminoacyl-tRNA to the A-site of ribosomes during protein biosynthesis. This chain is Elongation factor 1-alpha, found in Thermococcus sibiricus (strain DSM 12597 / MM 739).